A 402-amino-acid chain; its full sequence is Putative epoxide hydrolase AFT8 (402 aa).

It belongs to the peptidase S33 family.

It functions in the pathway mycotoxin biosynthesis. Functionally, putative epoxide hydrolase; part of the gene clusters that mediate the biosynthesis of the host-selective toxins (HSTs) AF-toxins responsible for Alternaria black spot of strawberry disease by the strawberry pathotype. AF-toxin I and III are valine derivatives of 2,3-dyhydroxy-isovaleric acid and 2-hydroxy-isovaleric acid respectively, while AF II is an isoleucine derivative of 2-hydroxy-valeric acid. These derivatives are bound to a 9,10-epoxy-8-hydroxy-9-methyl-decatrienoic acid (EDA) moiety. On cellular level, AF-toxins affect plasma membrane of susceptible cells and cause a sudden increase in loss of K(+) after a few minutes of toxin treatment. The aldo-keto reductase AFTS1 catalyzes the conversion of 2-keto-isovaleric acid (2-KIV) to 2-hydroxy-isovaleric acid (2-HIV) by reduction of its ketone to an alcohol. The acyl-CoA ligase AFT1, the hydrolase AFT2 and the enoyl-CoA hydratases AFT3 and AFT6, but also the polyketide synthase AFT9, the acyl-CoA dehydrogenase AFT10, the cytochrome P450 monooxygenase AFT11 and the oxidoreductase AFT12 are all involved in the biosynthesis of the AK-, AF- and ACT-toxin common EDA structural moiety. The exact function of each enzyme, and of additional enzymes identified within the AF-toxin clusters have still to be determined. The polypeptide is Putative epoxide hydrolase AFT8 (Alternaria alternata (Alternaria rot fungus)).